The sequence spans 111 residues: U-scoloptoxin(16)-Sm2a (111 aa).

The signal sequence occupies residues methionine 1 to tryptophan 28.

It belongs to the scoloptoxin-16 family. Post-translationally, contains 4 disulfide bonds. Expressed by the venom gland.

It localises to the secreted. The protein is U-scoloptoxin(16)-Sm2a of Scolopendra morsitans (Tanzanian blue ringleg centipede).